Reading from the N-terminus, the 160-residue chain is Ubiquitin-like protein 4A (160 aa).

Residues 1–76 enclose the Ubiquitin-like domain; the sequence is MQLTVKALQG…LNLVVKPLEK (76 aa). Lysine 48 participates in a covalent cross-link: Glycyl lysine isopeptide (Lys-Gly) (interchain with G-Cter in ubiquitin). A required and sufficient for interaction with BAG6 region spans residues 99–141; it reads WQLIAKVLARHFSAADASRVLDQLQRDYERSLSRLTLDDIERL.

As to quaternary structure, component of the BAG6/BAT3 complex, at least composed of BAG6, UBL4A and GET4/TRC35. Interacts with BAG6; the interaction is direct and required for UBL4A protein stability. Interacts with USP13; may be indirect via BAG6. Post-translationally, polyubiquitinated. Ubiquitination by AMFR and deubiquitination by USP13 may regulate the interaction between the BAG6/BAT complex and SGTA and therefore may regulate client proteins fate.

The protein localises to the cytoplasm. It is found in the cytosol. It localises to the nucleus. Its function is as follows. As part of a cytosolic protein quality control complex, the BAG6/BAT3 complex, maintains misfolded and hydrophobic patches-containing proteins in a soluble state and participates in their proper delivery to the endoplasmic reticulum or alternatively can promote their sorting to the proteasome where they undergo degradation. The BAG6/BAT3 complex is involved in the post-translational delivery of tail-anchored/type II transmembrane proteins to the endoplasmic reticulum membrane. Recruited to ribosomes, it interacts with the transmembrane region of newly synthesized tail-anchored proteins and together with SGTA and ASNA1 mediates their delivery to the endoplasmic reticulum. Client proteins that cannot be properly delivered to the endoplasmic reticulum are ubiquitinated and sorted to the proteasome. Similarly, the BAG6/BAT3 complex also functions as a sorting platform for proteins of the secretory pathway that are mislocalized to the cytosol either delivering them to the proteasome for degradation or to the endoplasmic reticulum. The BAG6/BAT3 complex also plays a role in the endoplasmic reticulum-associated degradation (ERAD), a quality control mechanism that eliminates unwanted proteins of the endoplasmic reticulum through their retrotranslocation to the cytosol and their targeting to the proteasome. It maintains these retrotranslocated proteins in an unfolded yet soluble state condition in the cytosol to ensure their proper delivery to the proteasome. The sequence is that of Ubiquitin-like protein 4A (UBL4A) from Rhinolophus ferrumequinum (Greater horseshoe bat).